The sequence spans 149 residues: UPF0178 protein SE_0451 (149 aa).

Belongs to the UPF0178 family.

In Staphylococcus epidermidis (strain ATCC 12228 / FDA PCI 1200), this protein is UPF0178 protein SE_0451.